The sequence spans 1020 residues: Non-canonical nonribosomal peptide synthetase hkm10 (1020 aa).

The adenylation (A) domain stretch occupies residues 21 to 419; the sequence is QMLEDPDAIA…GRFDHQVKIR (399 aa). A Carrier domain is found at 526-608; it reads QDKVPSEGAS…QLAHIVDRNQ (83 aa). Ser568 carries the post-translational modification O-(pantetheine 4'-phosphoryl)serine. Positions 652–894 are short-chain dehydrogenase/reductase (R) domain; it reads LTGATGFVGA…FVPIDYVTST (243 aa).

This sequence belongs to the NRP synthetase family.

The protein operates within secondary metabolite biosynthesis. In terms of biological role, non-canonical nonribosomal peptide synthetase; part of the gene cluster that mediates the biosynthesis of hancockiamides, an unusual new family of N-cinnamoylated piperazines. The NRPS hkm10 and the NmrA-like reductase hkm9 are proposed to convert two molecules of L-Phe to the intermediary piperazine called xenocockiamide A. Xenocockiamide A is then converted to hancockiamide D via a series of hydroxylations and O-methylations. The tyrosinase hkm6 may catalyze an aromatic hydroxylation, then the 2-oxoglutarate-dependent Fe(II) dioxygenase hkm4 and the FAD-dependent phenol hydroxylase hkm7 may catalyze consecutive hydroxylations to install 2 more hydroxy groups, and the methyltransferase hkm8 probably catalyzes two methylations using 2 molecules of S-adenosyl-L-methionine (SAM). The NRPS hkm11 activates and transfers trans-cinnamate supplied by the PAL hkm12 to hancockiamide D and produces hancockiamide A. NRPS Hkm11 has the flexibility to tolerate the bulky hancockiamide G as a substrate and the absence of the acetyl-transferase hkm3 opens up the opportunity for hkm11 to introduce a second N-cinnamoyl moiety. The cytochrome P450 monooxygenase hkm5 catalyzes the methylenedioxy bridge formation, converting hancockiamide A into hancockiamide G. Hkm5 can also convert hancockiamide B into hancockiamide C, and hancockiamide D into hancockiamide H. The N-acetyltransferase hkm3 finally transfers an acetyl group to 1-N of piperazine, converting hancockiamide A into hancockiamide B and hancockiamide G into hancockiamide C. The chain is Non-canonical nonribosomal peptide synthetase hkm10 from Aspergillus hancockii.